Reading from the N-terminus, the 461-residue chain is Probable carboxypeptidase MGYG_04702 (461 aa).

The signal sequence occupies residues 1–20; sequence MQKTYLLALVSLLASSLVEA. 2 N-linked (GlcNAc...) asparagine glycosylation sites follow: Asn-48 and Asn-99. Asp-176 is a binding site for Zn(2+). The Proton acceptor role is filled by Glu-208. Glu-209 is a Zn(2+) binding site. N-linked (GlcNAc...) asparagine glycosylation is present at Asn-396.

Belongs to the peptidase M20A family. The cofactor is Zn(2+).

Its subcellular location is the secreted. The sequence is that of Probable carboxypeptidase MGYG_04702 from Arthroderma gypseum (strain ATCC MYA-4604 / CBS 118893) (Microsporum gypseum).